The sequence spans 228 residues: Biopolymer transport protein exbB1 (228 aa).

Helical transmembrane passes span 11-31 (LGLM…LLAE), 116-136 (LTLI…LGLI), and 158-178 (LGVA…AVAG).

It belongs to the ExbB/TolQ family. In terms of assembly, the accessory proteins ExbB and ExbD seem to form a complex with TonB.

It is found in the cell inner membrane. Its function is as follows. Involved in the TonB-dependent energy-dependent transport of various receptor-bound substrates. Protects ExbD from proteolytic degradation and functionally stabilizes TonB. This is Biopolymer transport protein exbB1 (exbB1) from Vibrio cholerae serotype O1 (strain ATCC 39315 / El Tor Inaba N16961).